The sequence spans 3066 residues: Serine-protein kinase ATM (3066 aa).

Ser2 carries the post-translational modification N-acetylserine. Ser367 is subject to Phosphoserine; by autocatalysis. The segment at 829 to 862 (LDHGVHPGEDDEDGGGCDSLMEAEGPSSTGLSTA) is disordered. The segment at 1380-1389 (DPAPNPPYFP) is interaction with ABL1. Ser1899 carries the phosphoserine; by autocatalysis modification. The 631-residue stretch at 1946–2576 (EVAKVAQSCS…LFIILALANA (631 aa)) folds into the FAT domain. Residues 1973 to 1982 (TDEQEKRSPT) show a composition bias toward basic and acidic residues. 2 disordered regions span residues 1973 to 2000 (TDEQEKRSPTFEEGSQGTTISSLSEKSK) and 2585 to 2607 (PETTRRSRITKSTSKENSHLDED). Residues 1985–1996 (EGSQGTTISSLS) show a composition bias toward polar residues. Ser1987 carries the phosphoserine; by autocatalysis modification. The span at 2597–2607 (TSKENSHLDED) shows a compositional bias: basic and acidic residues. The 314-residue stretch at 2696-3009 (FKTEFRLAGG…ECKQSLSDTD (314 aa)) folds into the PI3K/PI4K catalytic domain. The G-loop stretch occupies residues 2702 to 2708 (LAGGLNL). The segment at 2877-2885 (GLGDRHVQN) is catalytic loop. Positions 2897 to 2921 (HIDLGVAFEQGKILPTPETVPFRLS) are activation loop. The interval 2986–3007 (DESDLHSTPNADDQECKQSLSD) is disordered. Positions 2991-3007 (HSTPNADDQECKQSLSD) are enriched in polar residues. Ser3006 carries the post-translational modification Phosphoserine. Lys3026 bears the N6-acetyllysine mark. The region spanning 3034–3066 (TVLSVGGQVNLLIQQAMDPKNLSRLFPGWKAWV) is the FATC domain. A Microbody targeting signal; atypical motif is present at residues 3056–3058 (SRL).

It belongs to the PI3/PI4-kinase family. ATM subfamily. As to quaternary structure, homodimer. Dimers or tetramers in inactive state. On DNA damage, autophosphorylation dissociates ATM into monomers rendering them catalytically active. Binds p53/TP53, ABL1, BRCA1 and TERF1. Interacts with NBN (via FxF/Y motif). Part of the BRCA1-associated genome surveillance complex (BASC), which contains BRCA1, MSH2, MSH6, MLH1, ATM, BLM, PMS2 and the RAD50-MRE11-NBN protein complex. This association could be a dynamic process changing throughout the cell cycle and within subnuclear domains. Interacts with RAD17; DNA damage promotes the association. Interacts with EEF1E1; the interaction, induced on DNA damage, up-regulates TP53. Interacts with KAT8, NABP2, ATMIN and CEP164. Interacts with AP2B1 and AP3B2; the interaction occurs in cytoplasmic vesicles. Interacts with TELO2 and TTI1. Interacts with DDX1. Interacts with BRAT1. Interacts with CYREN (via XLF motif). Interacts (via microbody targeting signal) with PEX5; promoting translocation to peroxisomes in response to reactive oxygen species (ROS). Post-translationally, phosphorylated by NUAK1/ARK5. Autophosphorylation on Ser-367, Ser-1899, Ser-1987 correlates with DNA damage-mediated activation of the kinase. Phosphorylated by NUAK1/ARK5. Autophosphorylation on Ser-367, Ser-1899, Ser-1987 correlates with DNA damage-mediated activation of the kinase. During the late stages of DNA damage response, dephosphorylated following deacetylation by SIRT7, leading to ATM deactivation. In terms of processing, acetylation, on DNA damage, is required for activation of the kinase activity, dimer-monomer transition, and subsequent autophosphorylation on Ser-1987. Acetylated in vitro by KAT5/TIP60. Deacetylated by SIRT7 during the late stages of DNA damage response, promoting ATM dephosphorylation and subsequent deactivation. As to expression, expressed in brain, skeletal muscle, testis, followed by spleen, lung, kidney, heart, liver and thymus. Ubiquitously expressed in embryonal tissues.

It localises to the nucleus. The protein resides in the cytoplasmic vesicle. The protein localises to the cytoplasm. It is found in the cytoskeleton. Its subcellular location is the microtubule organizing center. It localises to the centrosome. The protein resides in the peroxisome matrix. It carries out the reaction L-seryl-[protein] + ATP = O-phospho-L-seryl-[protein] + ADP + H(+). The catalysed reaction is L-threonyl-[protein] + ATP = O-phospho-L-threonyl-[protein] + ADP + H(+). Its activity is regulated as follows. Activated by the MRN (MRE11-RAD50-NBS1) complex in response to DNA double strand breaks (DSBs), which recruits ATM to DSBs and promotes its activation. Inhibited by wortmannin. Serine/threonine protein kinase which activates checkpoint signaling upon double strand breaks (DSBs), apoptosis and genotoxic stresses such as ionizing ultraviolet A light (UVA), thereby acting as a DNA damage sensor. Recognizes the substrate consensus sequence [ST]-Q. Phosphorylates 'Ser-139' of histone variant H2AX at double strand breaks (DSBs), thereby regulating DNA damage response mechanism. Also plays a role in pre-B cell allelic exclusion, a process leading to expression of a single immunoglobulin heavy chain allele to enforce clonality and monospecific recognition by the B-cell antigen receptor (BCR) expressed on individual B-lymphocytes. After the introduction of DNA breaks by the RAG complex on one immunoglobulin allele, acts by mediating a repositioning of the second allele to pericentromeric heterochromatin, preventing accessibility to the RAG complex and recombination of the second allele. Also involved in signal transduction and cell cycle control. May function as a tumor suppressor. Necessary for activation of ABL1 and SAPK. Phosphorylates DYRK2, CHEK2, p53/TP53, FBXW7, FANCD2, NFKBIA, BRCA1, CREBBP/CBP, RBBP8/CTIP, FBXO46, MRE11, nibrin (NBN), RAD50, RAD17, PELI1, TERF1, UFL1, RAD9, UBQLN4 and DCLRE1C. May play a role in vesicle and/or protein transport. Could play a role in T-cell development, gonad and neurological function. Binds DNA ends. Plays a role in replication-dependent histone mRNA degradation. Phosphorylation of DYRK2 in nucleus in response to genotoxic stress prevents its MDM2-mediated ubiquitination and subsequent proteasome degradation. Phosphorylates ATF2 which stimulates its function in DNA damage response. Phosphorylates ERCC6 which is essential for its chromatin remodeling activity at DNA double-strand breaks. Phosphorylates TTC5/STRAP at 'Ser-203' in the cytoplasm in response to DNA damage, which promotes TTC5/STRAP nuclear localization. Also involved in pexophagy by mediating phosphorylation of PEX5: translocated to peroxisomes in response to reactive oxygen species (ROS), and catalyzes phosphorylation of PEX5, promoting PEX5 ubiquitination and induction of pexophagy. The protein is Serine-protein kinase ATM (Atm) of Mus musculus (Mouse).